The following is a 76-amino-acid chain: Acyl carrier protein (76 aa).

The 74-residue stretch at 1 to 74 (MEERIKEIIA…DVINYIKEKK (74 aa)) folds into the Carrier domain. Ser-34 carries the post-translational modification O-(pantetheine 4'-phosphoryl)serine.

This sequence belongs to the acyl carrier protein (ACP) family. In terms of processing, 4'-phosphopantetheine is transferred from CoA to a specific serine of apo-ACP by AcpS. This modification is essential for activity because fatty acids are bound in thioester linkage to the sulfhydryl of the prosthetic group.

Its subcellular location is the cytoplasm. Its pathway is lipid metabolism; fatty acid biosynthesis. Functionally, carrier of the growing fatty acid chain in fatty acid biosynthesis. The polypeptide is Acyl carrier protein (Persephonella marina (strain DSM 14350 / EX-H1)).